The primary structure comprises 1263 residues: Topoisomerase 1-associated factor 1 (1263 aa).

Disordered regions lie at residues glutamate 1042–glutamine 1098 and valine 1178–glutamate 1263. Over residues threonine 1060 to lysine 1071 the composition is skewed to basic residues. Residues glutamate 1179–glutamate 1189 are compositionally biased toward acidic residues. Positions valine 1211 to aspartate 1226 are enriched in polar residues.

Belongs to the timeless family. In terms of assembly, component of the fork protection complex (FPC) consisting of TOF1 and CSM3.

It is found in the nucleus. In terms of biological role, forms a fork protection complex (FPC) with CSM3 and which is required for chromosome segregation during meiosis and DNA damage repair. FPC coordinates leading and lagging strand synthesis and moves with the replication fork. FPC stabilizes replication forks in a configuration that is recognized by replication checkpoint sensors. The sequence is that of Topoisomerase 1-associated factor 1 (YBL053) from Candida albicans (strain SC5314 / ATCC MYA-2876) (Yeast).